The primary structure comprises 224 residues: Urease accessory protein UreF (224 aa).

The protein belongs to the UreF family. As to quaternary structure, ureD, UreF and UreG form a complex that acts as a GTP-hydrolysis-dependent molecular chaperone, activating the urease apoprotein by helping to assemble the nickel containing metallocenter of UreC. The UreE protein probably delivers the nickel.

The protein localises to the cytoplasm. Its function is as follows. Required for maturation of urease via the functional incorporation of the urease nickel metallocenter. This Klebsiella pneumoniae subsp. pneumoniae (strain ATCC 700721 / MGH 78578) protein is Urease accessory protein UreF.